The following is a 189-amino-acid chain: Notch ligand osm-11 (189 aa).

An N-terminal signal peptide occupies residues 1–18; the sequence is MNFITVAALAIVMVLAQA.

May interact with lin-12/Notch receptor. In terms of tissue distribution, expressed in coelomocytes (at protein level).

It localises to the apical cell membrane. Probable secreted lin-12/Notch ligand or co-ligand involved in the mediation of Notch signaling. Involved in the lin-12/Notch pathway signaling of cell fate in vulval precursor cells (VPCs), acting redundantly with dsl-1 and lag-2. Required for normal octanol avoidance response, acting via both lin-12/Notch and glp-1/Notch signaling pathways in neurons, in concert with lag-2. Involved in regulation of sleep-like quiescence during the larval to adult transition, acting via Notch receptor activation and in parallel with EGF signaling. The polypeptide is Notch ligand osm-11 (Caenorhabditis elegans).